The primary structure comprises 186 residues: Adenine phosphoribosyltransferase (186 aa).

This sequence belongs to the purine/pyrimidine phosphoribosyltransferase family. In terms of assembly, homodimer.

It is found in the cytoplasm. The enzyme catalyses AMP + diphosphate = 5-phospho-alpha-D-ribose 1-diphosphate + adenine. Its pathway is purine metabolism; AMP biosynthesis via salvage pathway; AMP from adenine: step 1/1. In terms of biological role, catalyzes a salvage reaction resulting in the formation of AMP, that is energically less costly than de novo synthesis. The chain is Adenine phosphoribosyltransferase from Sulfurovum sp. (strain NBC37-1).